Here is a 221-residue protein sequence, read N- to C-terminus: Sentrin-specific protease 8 (221 aa).

Position 1 is an N-acetylmethionine (Met1). Residues 11–174 (SLLRQSDVSL…MYVICNTEAL (164 aa)) form a protease region. Catalysis depends on residues His102 and Asp119. Cys163 (nucleophile) is an active-site residue.

It belongs to the peptidase C48 family.

Functionally, protease that catalyzes two essential functions in the NEDD8 pathway: processing of full-length NEDD8 to its mature form and deconjugation of NEDD8 from targeted proteins such as cullins or p53. The chain is Sentrin-specific protease 8 (Senp8) from Mus musculus (Mouse).